The chain runs to 228 residues: Cytochrome c oxidase subunit 2 (228 aa).

The Mitochondrial intermembrane portion of the chain corresponds to 1–26; the sequence is MRTWSNFNLQNSASPLMEQIIFFHDH. The helical transmembrane segment at 27-48 threads the bilayer; the sequence is TLIILIMITILVGYIMINLFFN. Topologically, residues 49–62 are mitochondrial matrix; the sequence is KFINRFFLVGQMIE. A helical membrane pass occupies residues 63–82; it reads LIWTVLPAITLIFIALPSLR. Residues 83–228 lie on the Mitochondrial intermembrane side of the membrane; that stretch reads LLYLLDELNN…FINWINNYSY (146 aa). The Cu cation site is built by His161, Cys196, Glu198, Cys200, His204, and Met207. Glu198 contributes to the Mg(2+) binding site.

The protein belongs to the cytochrome c oxidase subunit 2 family. In terms of assembly, component of the cytochrome c oxidase (complex IV, CIV), a multisubunit enzyme composed of a catalytic core of 3 subunits and several supernumerary subunits. The complex exists as a monomer or a dimer and forms supercomplexes (SCs) in the inner mitochondrial membrane with ubiquinol-cytochrome c oxidoreductase (cytochrome b-c1 complex, complex III, CIII). It depends on Cu cation as a cofactor.

The protein localises to the mitochondrion inner membrane. It catalyses the reaction 4 Fe(II)-[cytochrome c] + O2 + 8 H(+)(in) = 4 Fe(III)-[cytochrome c] + 2 H2O + 4 H(+)(out). Functionally, component of the cytochrome c oxidase, the last enzyme in the mitochondrial electron transport chain which drives oxidative phosphorylation. The respiratory chain contains 3 multisubunit complexes succinate dehydrogenase (complex II, CII), ubiquinol-cytochrome c oxidoreductase (cytochrome b-c1 complex, complex III, CIII) and cytochrome c oxidase (complex IV, CIV), that cooperate to transfer electrons derived from NADH and succinate to molecular oxygen, creating an electrochemical gradient over the inner membrane that drives transmembrane transport and the ATP synthase. Cytochrome c oxidase is the component of the respiratory chain that catalyzes the reduction of oxygen to water. Electrons originating from reduced cytochrome c in the intermembrane space (IMS) are transferred via the dinuclear copper A center (CU(A)) of subunit 2 and heme A of subunit 1 to the active site in subunit 1, a binuclear center (BNC) formed by heme A3 and copper B (CU(B)). The BNC reduces molecular oxygen to 2 water molecules using 4 electrons from cytochrome c in the IMS and 4 protons from the mitochondrial matrix. This Galleria mellonella (Greater wax moth) protein is Cytochrome c oxidase subunit 2 (COII).